The chain runs to 268 residues: Glucosamine-6-phosphate deaminase (268 aa).

The active-site Proton acceptor; for enolization step is the Asp-72. Asp-141 functions as the For ring-opening step in the catalytic mechanism. His-143 (proton acceptor; for ring-opening step) is an active-site residue. Glu-148 (for ring-opening step) is an active-site residue.

It belongs to the glucosamine/galactosamine-6-phosphate isomerase family. NagB subfamily. Homohexamer.

It catalyses the reaction alpha-D-glucosamine 6-phosphate + H2O = beta-D-fructose 6-phosphate + NH4(+). The protein operates within amino-sugar metabolism; N-acetylneuraminate degradation; D-fructose 6-phosphate from N-acetylneuraminate: step 5/5. Its activity is regulated as follows. Allosterically activated by N-acetylglucosamine 6-phosphate (GlcNAc6P). In terms of biological role, catalyzes the reversible isomerization-deamination of glucosamine 6-phosphate (GlcN6P) to form fructose 6-phosphate (Fru6P) and ammonium ion. The protein is Glucosamine-6-phosphate deaminase of Histophilus somni (strain 2336) (Haemophilus somnus).